The sequence spans 270 residues: Formamidopyrimidine-DNA glycosylase (270 aa).

The active-site Schiff-base intermediate with DNA is the Pro2. Glu3 serves as the catalytic Proton donor. Catalysis depends on Lys58, which acts as the Proton donor; for beta-elimination activity. The DNA site is built by His91, Arg110, and Arg151. The segment at 236–270 (LVYGRDGLPCPNCGRALKHATIGQRASVWCSHCQR) adopts an FPG-type zinc-finger fold. Arg260 serves as the catalytic Proton donor; for delta-elimination activity.

The protein belongs to the FPG family. Monomer. Zn(2+) serves as cofactor.

The enzyme catalyses Hydrolysis of DNA containing ring-opened 7-methylguanine residues, releasing 2,6-diamino-4-hydroxy-5-(N-methyl)formamidopyrimidine.. It catalyses the reaction 2'-deoxyribonucleotide-(2'-deoxyribose 5'-phosphate)-2'-deoxyribonucleotide-DNA = a 3'-end 2'-deoxyribonucleotide-(2,3-dehydro-2,3-deoxyribose 5'-phosphate)-DNA + a 5'-end 5'-phospho-2'-deoxyribonucleoside-DNA + H(+). Involved in base excision repair of DNA damaged by oxidation or by mutagenic agents. Acts as a DNA glycosylase that recognizes and removes damaged bases. Has a preference for oxidized purines, such as 7,8-dihydro-8-oxoguanine (8-oxoG). Has AP (apurinic/apyrimidinic) lyase activity and introduces nicks in the DNA strand. Cleaves the DNA backbone by beta-delta elimination to generate a single-strand break at the site of the removed base with both 3'- and 5'-phosphates. The polypeptide is Formamidopyrimidine-DNA glycosylase (Stenotrophomonas maltophilia (strain R551-3)).